The following is a 325-amino-acid chain: Cyclic AMP-responsive element-binding protein 1 (325 aa).

2 stretches are compositionally biased toward polar residues: residues 1-11 (MESGAENQQSG) and 18-27 (AESQQMTVQA). Disordered stretches follow at residues 1–27 (MESGAENQQSGDAAVTEAESQQMTVQA) and 92–111 (SEDSQESVDSVTDSQKRREI). The KID domain maps to 85–144 (QISTIAESEDSQESVDSVTDSQKRREILSRRPSYRKILNDLSSDAPGVPRIEEEKSEEET). Ser117 is modified (phosphoserine; by CaMK1, CaMK2, CaMK4, PKB/AKT1 or PKB/AKT2, RPS6KA3, RPS6KA4, RPS6KA5 and SGK1). Lys120 is covalently cross-linked (Glycyl lysine isopeptide (Lys-Gly) (interchain with G-Cter in SUMO2)). The segment at 124 to 146 (DLSSDAPGVPRIEEEKSEEETSA) is disordered. The residue at position 126 (Ser126) is a Phosphoserine; by CaMK2. Ser255 is modified (phosphoserine; by HIPK2). The bZIP domain occupies 267-325 (ARKREVRLMKNREAARECRRKKKEYVKCLENRVAVLENQNKTLIEELKALKDLYCHKSD). The interval 268-293 (RKREVRLMKNREAARECRRKKKEYVK) is basic motif. Glycyl lysine isopeptide (Lys-Gly) (interchain with G-Cter in SUMO1) cross-links involve residues Lys269 and Lys288. A leucine-zipper region spans residues 295–316 (LENRVAVLENQNKTLIEELKAL).

Belongs to the bZIP family. As to quaternary structure, interacts with PPRC1. Binds DNA as a dimer. This dimer is stabilized by magnesium ions. Interacts, through the bZIP domain, with the coactivators CRTC1/TORC1, CRTC2/TORC2 and CRTC3/TORC3. When phosphorylated on Ser-117, binds CREBBP. Interacts with CREBL2; regulates CREB1 phosphorylation, stability and transcriptional activity. Interacts (phosphorylated form) with TOX3. Interacts with ARRB1. Binds to HIPK2. Interacts with SGK1. Interacts with TSSK4; this interaction facilitates phosphorylation on Ser-117. Forms a complex with KMT2A and CREBBP. Interacts with TOX4; CREB1 is required for full induction of TOX4-dependent activity and the interaction is increased by cAMP and inhibited by insulin. In terms of processing, sumoylated with SUMO1. Sumoylation on Lys-288, but not on Lys-269, is required for nuclear localization of this protein. Sumoylation is enhanced under hypoxia, promoting nuclear localization and stabilization. Stimulated by phosphorylation. Phosphorylation of both Ser-117 and Ser-126 in the SCN regulates the activity of CREB and participates in circadian rhythm generation. Phosphorylation of Ser-117 allows CREBBP binding. Phosphorylated upon calcium influx by CaMK4 and CaMK2 on Ser-117. CaMK4 is much more potent than CaMK2 in activating CREB. Phosphorylated by CaMK2 on Ser-126. Phosphorylation of Ser-126 blocks CREB-mediated transcription even when Ser-117 is phosphorylated. Phosphorylated by CaMK1. Phosphorylation of Ser-255 by HIPK2 in response to genotoxic stress promotes CREB1 activity, facilitating the recruitment of the coactivator CBP. Phosphorylated at Ser-117 by RPS6KA3, RPS6KA4 and RPS6KA5 in response to mitogenic or stress stimuli. CREBL2 positively regulates phosphorylation at Ser-117 thereby stimulating CREB1 transcriptional activity. In liver, phosphorylation is induced by fasting or glucagon in a circadian fashion. Phosphorylated by TSSK4 on Ser-117.

Its subcellular location is the nucleus. Functionally, phosphorylation-dependent transcription factor that stimulates transcription upon binding to the DNA cAMP response element (CRE), a sequence present in many viral and cellular promoters. Transcription activation is enhanced by the TORC coactivators which act independently of Ser-117 phosphorylation. Involved in different cellular processes including the synchronization of circadian rhythmicity and the differentiation of adipose cells. Regulates the expression of apoptotic and inflammatory response factors in cardiomyocytes in response to ERFE-mediated activation of AKT signaling. The chain is Cyclic AMP-responsive element-binding protein 1 (CREB1) from Bos taurus (Bovine).